We begin with the raw amino-acid sequence, 265 residues long: 4-hydroxy-tetrahydrodipicolinate reductase (265 aa).

Residues 7–12 (GASGRM), Asp-33, 96–98 (GTT), and 120–123 (AANM) each bind NAD(+). His-153 (proton donor/acceptor) is an active-site residue. Residue His-154 coordinates (S)-2,3,4,5-tetrahydrodipicolinate. The Proton donor role is filled by Lys-157. Residue 163–164 (GT) coordinates (S)-2,3,4,5-tetrahydrodipicolinate.

The protein belongs to the DapB family.

Its subcellular location is the cytoplasm. It carries out the reaction (S)-2,3,4,5-tetrahydrodipicolinate + NAD(+) + H2O = (2S,4S)-4-hydroxy-2,3,4,5-tetrahydrodipicolinate + NADH + H(+). The enzyme catalyses (S)-2,3,4,5-tetrahydrodipicolinate + NADP(+) + H2O = (2S,4S)-4-hydroxy-2,3,4,5-tetrahydrodipicolinate + NADPH + H(+). It participates in amino-acid biosynthesis; L-lysine biosynthesis via DAP pathway; (S)-tetrahydrodipicolinate from L-aspartate: step 4/4. Its function is as follows. Catalyzes the conversion of 4-hydroxy-tetrahydrodipicolinate (HTPA) to tetrahydrodipicolinate. In Cupriavidus pinatubonensis (strain JMP 134 / LMG 1197) (Cupriavidus necator (strain JMP 134)), this protein is 4-hydroxy-tetrahydrodipicolinate reductase.